The chain runs to 343 residues: MGHRKLASPRRGSAGVRPRKRASEILPTPRSWPTIQSNEPKLLGFVGYKVGMSHIFMIDDKPTSPNYGKEIYVPVSVIETPPVIPLAIRAYVMGPKGEPTTLTEYWGDISEDLLKLIQQRKVTRLKIDKEKMKGKLDEINNKLNDILYLRVLIATQPKLVPSLGKKKPEIVEVQVGGGDIKSQLNYVLNILGKPLSVKDVFKEGQLIDIIGVTKGKGFQGVVKRYGVVELPRWHKHRKGSRKVGARGPSFSTPSYVPQPGQMGYHRRTEYNKRILKISDDPNEINPKGGFVNYGIVRNTYLIIEGSIIGAKKRPLFLRYPIRPSWIPQSAPKITYVNLYSQQG.

Disordered stretches follow at residues 1-31 (MGHR…TPRS) and 238-262 (KGSR…PGQM).

It belongs to the universal ribosomal protein uL3 family. As to quaternary structure, part of the 50S ribosomal subunit. Forms a cluster with proteins L14 and L24e.

In terms of biological role, one of the primary rRNA binding proteins, it binds directly near the 3'-end of the 23S rRNA, where it nucleates assembly of the 50S subunit. The protein is Large ribosomal subunit protein uL3 of Sulfurisphaera tokodaii (strain DSM 16993 / JCM 10545 / NBRC 100140 / 7) (Sulfolobus tokodaii).